The chain runs to 404 residues: Glycosylated lysosomal membrane protein B (404 aa).

The signal sequence occupies residues 1–24; sequence MSCTRGWRLILLGLLCVGLLGTRG. The Lumenal portion of the chain corresponds to 25-364; it reads QDESRKVSVQ…YGDPPRDSFS (340 aa). N-linked (GlcNAc...) asparagine glycosylation is found at Asn-85, Asn-124, Asn-128, Asn-142, Asn-152, Asn-156, Asn-163, Asn-168, Asn-178, Asn-189, Asn-205, Asn-221, Asn-266, Asn-303, and Asn-330. The chain crosses the membrane as a helical span at residues 365-385; it reads ILVICIMAVALGTPLLLLIIG. The Cytoplasmic segment spans residues 386–404; that stretch reads TVLVTAVRHKVYPNYQPIN. The Lysosomal targeting motif motif lies at 400-404; it reads YQPIN.

This sequence belongs to the GLMP family. As to quaternary structure, interacts (via lumenal domain) with lysosomal protein MFSD1; the interaction starts while both proteins are still in the endoplasmic reticulum and is required for stabilization of MFSD1 in lysosomes but has no direct effect on its targeting to lysosomes or transporter activity.

It is found in the lysosome membrane. In terms of biological role, required to protect lysosomal transporter MFSD1 from lysosomal proteolysis and for MFSD1 lysosomal localization. The protein is Glycosylated lysosomal membrane protein B (glmp-b) of Xenopus laevis (African clawed frog).